Reading from the N-terminus, the 500-residue chain is Trans-cinnamate 4-monooxygenase (500 aa).

The helical transmembrane segment at 3 to 23 (ALLVEKVLLGLFVAAVLALVV) threads the bilayer. (E)-cinnamate is bound by residues 213–218 (RSRLSQ) and Ala302. A heme-binding site is contributed by Cys442.

This sequence belongs to the cytochrome P450 family. Heme serves as cofactor. As to expression, expressed in roots and leaves.

It localises to the membrane. It catalyses the reaction (E)-cinnamate + reduced [NADPH--hemoprotein reductase] + O2 = (E)-4-coumarate + oxidized [NADPH--hemoprotein reductase] + H2O + H(+). The protein operates within phenylpropanoid metabolism; trans-4-coumarate biosynthesis; trans-4-coumarate from trans-cinnamate: step 1/1. Its function is as follows. Catalyzes the first oxidative step of the phenylpropanoid pathway in higher plants by transforming trans-cinnamate into p-coumarate. The compounds formed by this pathway are essential components for lignification, pollination, and defense against ultraviolet light, predators and pathogens. This chain is Trans-cinnamate 4-monooxygenase, found in Oryza sativa subsp. japonica (Rice).